The following is a 565-amino-acid chain: MSEQKLALNEYLKTDSDYLRGTIKEGLDSAVTGSFSDGDQQLIKFHGFYQQDDRDLRNERKEQKLEPLYSFMLRARVPGGICSPQQWLGVDKIASTLTSSNSIRLTTRQTFQYHGIPKRNLKTIIQDLDREALDSIAACGDVNRNVMCNPNPVESKLHEQAYAVAKQLSDHLLPHTRAYAEIWLDEEKLLSTEDETVEPVYGKTYLPRKFKMAVAVPPDNDVDVYTNDLGFIAVAENGELVGFNLTAGGGMGSTHGEVETFPRLADDFGFIKTEDVMKFAEAVMTVQRDWGNRVNRKRSRLKYTIVDHGYEKFKAEVELRAGVKFEPKRDVVIGDRGDRYGWVEGVDGKWHLTLFIESGRIKDLPGQTLQTGLREIAKIHKGDFRMTSNQNMIIAGVAAEDKATIEGLARKHGLLGQVLTQTRGHSIACVALPTCPLAMAEAERYFPEFIDHIDALQAKHGISEQAIVVRMTGCPNGCARPFAAEIGLVGKAPGRYNLYLGASFEGTRLNKMHRENIQEAEILAELDTLFGRYAVERDAGETFGNFTVRVGVVKAVIDAAKDFHG.

[4Fe-4S] cluster-binding residues include Cys-429, Cys-435, Cys-474, and Cys-478. Cys-478 contacts siroheme.

Belongs to the nitrite and sulfite reductase 4Fe-4S domain family. Alpha(8)-beta(8). The alpha component is a flavoprotein, the beta component is a hemoprotein. It depends on siroheme as a cofactor. Requires [4Fe-4S] cluster as cofactor.

The catalysed reaction is hydrogen sulfide + 3 NADP(+) + 3 H2O = sulfite + 3 NADPH + 4 H(+). It participates in sulfur metabolism; hydrogen sulfide biosynthesis; hydrogen sulfide from sulfite (NADPH route): step 1/1. Its function is as follows. Component of the sulfite reductase complex that catalyzes the 6-electron reduction of sulfite to sulfide. This is one of several activities required for the biosynthesis of L-cysteine from sulfate. The protein is Sulfite reductase [NADPH] hemoprotein beta-component of Shewanella baltica (strain OS155 / ATCC BAA-1091).